We begin with the raw amino-acid sequence, 325 residues long: Hydroxylase/desaturase poxK (325 aa).

Positions 1–12 (MTATATPVPTVA) are enriched in low complexity. A disordered region spans residues 1–25 (MTATATPVPTVASHAQDITLPPPPK).

Belongs to the asaB hydroxylase/desaturase family.

It functions in the pathway secondary metabolite biosynthesis. In terms of biological role, hydroxylase/desaturase; part of the gene cluster that mediates the biosynthesis of oxaleimides, cytotoxic compounds containing an unusual disubstituted succinimide moiety. The first step of the pathway is provided by the HR-PKS poxF that serves in a new mode of collaborative biosynthesis with the PKS-NRPS poxE, by providing the olefin containing amino acid substrate via the synthesis of an ACP-bound dec-4-enoate. The cytochrome P450 monooxygenase poxM-catalyzed oxidation at the alpha-position creates the enzyme-bound 2-hydroxydec-4-enoyl-ACP thioester, which may be prone to spontaneous hydrolysis to yield 2-hydroxydec-4-enoic acid due to increased electrophilicity of the carbonyl. 2-hydroxydec-4-enoic acid can then be further oxidized by poxM to yield the alpha-ketoacid 2-oxodec-4-enoicacid, which is reductively aminated by the aminotransferase poxL to yield (S,E)-2-aminodec-4-enoic acid. The Hybrid PKS-NRPS synthetase poxE then performs condensation between the octaketide product of its PKS modules and the amino group of (S,E)-2-aminodec-4-enoic acid which is activated and incorporated by the adenylation domain. The resulting aminoacyl product can be cyclized by the Diels-Alderase PoxQ and reductively released by the reductive (R) domain of poxE to yield an aldehyde intermediate. The released aldehyde is then substrate for a Knoevenagel condensation by the hydrolyase poxO followed by an oxidation at the 5-position of the pyrrolidone ring. The presence of the olefin from the amino acid building block allows for migration of the substituted allyl group to occur. This allylic transposition reaction takes place in a conjugate addition, semipinacol-like fashion to yield a succinimide intermediate. Iterative two-electron oxidations of the C7 methyl of the succinimide intermediate to the carboxylic acid can be catalyzed by one of two remaining cytochrome P450 monooxygenasess poxC or poxD to yield oxaleimide A. Subsequent oxidation yields the maleimide scaffold oxaleimide I. Both oxaleimide A and oxaleimide I can undergo oxidative modifications in the decalin ring to yield the series of products oxaleimides B to H. The protein is Hydroxylase/desaturase poxK of Penicillium oxalicum.